A 45-amino-acid polypeptide reads, in one-letter code: Psychimicin (45 aa).

Intrachain disulfides connect C10–C24, C14–C36, and C25–C42.

In terms of assembly, monomer. In terms of tissue distribution, hemolymph.

It localises to the secreted. Has antimicrobial activity. Is particularly active against fungi, and to a lesser extent against Gram-positive and Gram-negative bacteria. This chain is Psychimicin, found in Oiketicus kirbyi (Bagworm moth).